Reading from the N-terminus, the 428-residue chain is Histone deacetylase 3 (428 aa).

Residues 3 to 316 form a histone deacetylase region; that stretch reads NRTAYFYDPD…WTFETSLLVE (314 aa). Positions 17, 21, and 25 each coordinate 1D-myo-inositol 1,4,5,6-tetrakisphosphate. H135 is a catalytic residue. D170, H172, and D259 together coordinate Zn(2+). Position 265 (R265) interacts with 1D-myo-inositol 1,4,5,6-tetrakisphosphate. The segment at 381-428 is disordered; the sequence is PSDLLSYERPDEADPEERGSEENFSRPEAANEFYDGDHDHDKESDVEI. 2 stretches are compositionally biased toward basic and acidic residues: residues 386–405 and 415–428; these read SYER…ENFS and DGDH…DVEI.

This sequence belongs to the histone deacetylase family. HD type 1 subfamily.

The protein localises to the nucleus. It is found in the chromosome. Its subcellular location is the cytoplasm. It localises to the cytosol. The enzyme catalyses N(6)-acetyl-L-lysyl-[histone] + H2O = L-lysyl-[histone] + acetate. The catalysed reaction is N(6)-acetyl-L-lysyl-[protein] + H2O = L-lysyl-[protein] + acetate. It catalyses the reaction N(6)-(2E)-butenoyl-L-lysyl-[protein] + H2O = (2E)-2-butenoate + L-lysyl-[protein]. It carries out the reaction N(6)-(2-hydroxyisobutanoyl)-L-lysyl-[protein] + H2O = 2-hydroxy-2-methylpropanoate + L-lysyl-[protein]. The enzyme catalyses N(6)-[(S)-lactoyl]-L-lysyl-[protein] + H2O = (S)-lactate + L-lysyl-[protein]. With respect to regulation, inositol tetraphosphate (1D-myo-inositol 1,4,5,6-tetrakisphosphate) promotes the histone deacetylase activity by acting as an intermolecular glue between hdac3 and N-Cor repressor complex components. In terms of biological role, histone deacetylase that catalyzes the deacetylation of lysine residues on the N-terminal part of the core histones (H2A, H2B, H3 and H4), and some other non-histone substrates. Histone deacetylation gives a tag for epigenetic repression and plays an important role in transcriptional regulation, cell cycle progression and developmental events. Histone deacetylases act via the formation of large multiprotein complexes, such as N-Cor repressor complex, which activate the histone deacetylase activity. Participates in the BCL6 transcriptional repressor activity by deacetylating the H3 'Lys-27' (H3K27) on enhancer elements, antagonizing EP300 acetyltransferase activity and repressing proximal gene expression. Also functions as a deacetylase for non-histone targets. In addition to protein deacetylase activity, also acts as a protein-lysine deacylase by recognizing other acyl groups: catalyzes removal of (2E)-butenoyl (crotonyl), lactoyl (lactyl) and 2-hydroxyisobutanoyl (2-hydroxyisobutyryl) acyl groups from lysine residues, leading to protein decrotonylation, delactylation and de-2-hydroxyisobutyrylation, respectively. This chain is Histone deacetylase 3 (hdac3), found in Danio rerio (Zebrafish).